The chain runs to 363 residues: Actin-related protein 7 (363 aa).

Met-1 is subject to N-acetylmethionine.

The protein belongs to the actin family. Plant ARP7 subfamily. Mostly expressed in flowers, and, to a lower extent, in roots, seedlings, leaves and siliques (at protein level).

The protein resides in the nucleus. It is found in the cytoplasm. Essential protein required during embryogenesis and all plant development stages, probably through a chromatin-mediated regulation of gene expression. The chain is Actin-related protein 7 (ARP7) from Arabidopsis thaliana (Mouse-ear cress).